The following is a 212-amino-acid chain: NAD(P)H-hydrate epimerase (212 aa).

A YjeF N-terminal domain is found at 11–212; sequence MRHYDSYTIN…ANDMGTYAVD (202 aa). (6S)-NADPHX is bound at residue 60–64; the sequence is NNGGD. Residues Asn61 and Asp123 each contribute to the K(+) site. (6S)-NADPHX contacts are provided by residues 127–133, Tyr138, and Asp156; that span reads GIGIDRA. Ser159 is a K(+) binding site.

Belongs to the NnrE/AIBP family. K(+) serves as cofactor.

The catalysed reaction is (6R)-NADHX = (6S)-NADHX. It carries out the reaction (6R)-NADPHX = (6S)-NADPHX. Its function is as follows. Catalyzes the epimerization of the S- and R-forms of NAD(P)HX, a damaged form of NAD(P)H that is a result of enzymatic or heat-dependent hydration. This is a prerequisite for the S-specific NAD(P)H-hydrate dehydratase to allow the repair of both epimers of NAD(P)HX. This Limosilactobacillus reuteri (strain ATCC 55730 / SD2112) (Lactobacillus reuteri) protein is NAD(P)H-hydrate epimerase.